The following is a 205-amino-acid chain: Bcl2-associated agonist of cell death (205 aa).

The segment at 1-139 is disordered; it reads MGTPKQPSLA…PFRGRSRSAP (139 aa). Residue serine 67 is modified to Phosphoserine. Polar residues predominate over residues 85-98; it reads IVQQQPGQAANNSH. Serine 113 carries the phosphoserine modification. Residues 118 to 128 show a composition bias toward acidic residues; the sequence is TEEDEGMEEEL. Serine 129 is subject to Phosphoserine. 2 positions are modified to asymmetric dimethylarginine; by PRMT1: arginine 132 and arginine 134. Phosphoserine is present on serine 135. Serine 137 is modified (phosphoserine; by PKA, PKB, PAK1, RPS6KA1, RPS6KB1 and PKC/PRKCQ). A BH3 motif is present at residues 148-162; that stretch reads YGRELRRMSDEFEGS. Phosphoserine is present on residues serine 156 and serine 171. The segment at 161-180 is disordered; that stretch reads GSFKGLPRPKSAGTATQMRQ.

Belongs to the Bcl-2 family. As to quaternary structure, forms heterodimers with the anti-apoptotic proteins, Bcl-X(L), Bcl-2 and Bcl-W. Also binds protein S100A10. The Ser-113/Ser-137 phosphorylated form binds 14-3-3 proteins. Interacts with AKT1 and PIM3. Interacts with HIF3A (via C-terminus domain); the interaction reduces the binding between BAD and BAX. Interacts (via BH3 domain) with NOL3 (via CARD domain); preventing the association of BAD with BCL2. Interacts with GIMAP3/IAN4 and GIMAP5/IAN5. Post-translationally, phosphorylated at one or more of Ser-113, Ser-137, Ser-156 and Ser-171 in response to survival stimuli, which blocks its pro-apoptotic activity. Phosphorylation on Ser-137 or Ser-113 promotes heterodimerization with 14-3-3 proteins. This interaction then facilitates the phosphorylation at Ser-156, a site within the BH3 motif, leading to the release of Bcl-X(L) and the promotion of cell survival. Ser-137 is the major site of AKT/PKB phosphorylation, Ser-156 the major site of protein kinase A (CAPK) phosphorylation. In terms of processing, methylation at Arg-132 and Arg-134 by PRMT1 inhibits Akt-mediated phosphorylation at Ser-137. As to expression, expressed in all tissues tested, including brain, liver, spleen and heart. In the brain, restricted to epithelial cells of the choroid plexus. Isoform alpha is the more abundant form.

It is found in the mitochondrion outer membrane. Its subcellular location is the cytoplasm. In terms of biological role, promotes cell death. Successfully competes for the binding to Bcl-X(L), Bcl-2 and Bcl-W, thereby affecting the level of heterodimerization of these proteins with BAX. Can reverse the death repressor activity of Bcl-X(L), but not that of Bcl-2. Appears to act as a link between growth factor receptor signaling and the apoptotic pathways. The chain is Bcl2-associated agonist of cell death (Bad) from Rattus norvegicus (Rat).